The primary structure comprises 166 residues: Peptidyl-prolyl cis-trans isomerase-like 1 (166 aa).

Residues Q10–P164 enclose the PPIase cyclophilin-type domain. Cyclosporin A contacts are provided by residues H54 to G65, T70 to G71, A99 to G104, G109 to F113, T119, and K125. At S149 the chain carries Phosphoserine.

It belongs to the cyclophilin-type PPIase family. PPIL1 subfamily. Identified in the spliceosome C complex. Interacts with SNW1/SKIP. Interacts with CDC40/PRP17; this interaction leads to CDC40 isomerization. Interacts with RBM22.

The protein resides in the nucleus. It catalyses the reaction [protein]-peptidylproline (omega=180) = [protein]-peptidylproline (omega=0). Its activity is regulated as follows. Inhibited by Cyclosporin A. In terms of biological role, involved in pre-mRNA splicing as component of the spliceosome. PPIases accelerate the folding of proteins. It catalyzes the cis-trans isomerization of proline imidic peptide bonds in oligopeptides. Catalyzes prolyl peptide bond isomerization in CDC40/PRP17. Plays an important role in embryonic brain development; this function is independent of its isomerase activity. This is Peptidyl-prolyl cis-trans isomerase-like 1 (Ppil1) from Mus musculus (Mouse).